Here is an 84-residue protein sequence, read N- to C-terminus: Anaphase-promoting complex subunit 11 (84 aa).

Residues Cys23, Cys26, Cys34, Cys37, Cys44, Cys51, His53, His56, His58, Cys59, Cys73, and Cys76 each contribute to the Zn(2+) site. Residues 34 to 77 (CPDCKVPGDDCPLVWGQCSHCFHMHCILKWLHAQQVQQHCPMCR) form an RING-type zinc finger.

Belongs to the RING-box family. The mammalian APC/C is composed at least of 14 distinct subunits ANAPC1, ANAPC2, CDC27/APC3, ANAPC4, ANAPC5, CDC16/APC6, ANAPC7, CDC23/APC8, ANAPC10, ANAPC11, CDC26/APC12, ANAPC13, ANAPC15 and ANAPC16 that assemble into a complex of at least 19 chains with a combined molecular mass of around 1.2 MDa; APC/C interacts with FZR1 and FBXO5. Interacts with the cullin domain of ANAPC2. Interacts with UBE2D2. Auto-ubiquitinated. As to expression, expressed at high levels in skeletal muscle and heart; in moderate levels in brain, kidney, and liver; and at low levels in colon, thymus, spleen, small intestine, placenta, lung and peripheral blood leukocyte.

Its subcellular location is the cytoplasm. The protein resides in the nucleus. The protein operates within protein modification; protein ubiquitination. Its function is as follows. Together with the cullin protein ANAPC2, constitutes the catalytic component of the anaphase promoting complex/cyclosome (APC/C), a cell cycle-regulated E3 ubiquitin ligase that controls progression through mitosis and the G1 phase of the cell cycle. The APC/C complex acts by mediating ubiquitination and subsequent degradation of target proteins: it mainly mediates the formation of 'Lys-11'-linked polyubiquitin chains and, to a lower extent, the formation of 'Lys-48'- and 'Lys-63'-linked polyubiquitin chains. The APC/C complex catalyzes assembly of branched 'Lys-11'-/'Lys-48'-linked branched ubiquitin chains on target proteins. May recruit the E2 ubiquitin-conjugating enzymes to the complex. In Homo sapiens (Human), this protein is Anaphase-promoting complex subunit 11 (ANAPC11).